The chain runs to 631 residues: Dolichyl-diphosphooligosaccharide--protein glycosyltransferase subunit 2 (631 aa).

An N-terminal signal peptide occupies residues methionine 1–alanine 22. Over leucine 23–valine 540 the chain is Lumenal. Asparagine 106 carries an N-linked (GlcNAc...) asparagine glycan. Residue lysine 154 forms a Glycyl lysine isopeptide (Lys-Gly) (interchain with G-Cter in ubiquitin) linkage. The chain crosses the membrane as a helical span at residues valine 541–isoleucine 561. The Cytoplasmic portion of the chain corresponds to arginine 562–threonine 571. Residues phenylalanine 572–valine 592 traverse the membrane as a helical segment. Topologically, residues tyrosine 593–glutamine 596 are lumenal. The chain crosses the membrane as a helical span at residues leucine 597–glycine 617. Residues asparagine 618–histidine 631 lie on the Cytoplasmic side of the membrane.

It belongs to the SWP1 family. As to quaternary structure, component of the oligosaccharyltransferase (OST) complex. OST exists in two different complex forms which contain common core subunits RPN1, RPN2, OST48, OST4, DAD1 and TMEM258, either STT3A or STT3B as catalytic subunits, and form-specific accessory subunits. STT3A complex assembly occurs through the formation of 3 subcomplexes. Subcomplex 1 contains RPN1 and TMEM258, subcomplex 2 contains the STT3A-specific subunits STT3A, DC2/OSTC, and KCP2 as well as the core subunit OST4, and subcomplex 3 contains RPN2, DAD1, and OST48. The STT3A complex can form stable complexes with the Sec61 complex or with both the Sec61 and TRAP complexes. Interacts with DDI2. Interacts with TMEM35A/NACHO.

Its subcellular location is the endoplasmic reticulum. The protein localises to the endoplasmic reticulum membrane. The protein operates within protein modification; protein glycosylation. Its function is as follows. Subunit of the oligosaccharyl transferase (OST) complex that catalyzes the initial transfer of a defined glycan (Glc(3)Man(9)GlcNAc(2) in eukaryotes) from the lipid carrier dolichol-pyrophosphate to an asparagine residue within an Asn-X-Ser/Thr consensus motif in nascent polypeptide chains, the first step in protein N-glycosylation. N-glycosylation occurs cotranslationally and the complex associates with the Sec61 complex at the channel-forming translocon complex that mediates protein translocation across the endoplasmic reticulum (ER). All subunits are required for a maximal enzyme activity. This chain is Dolichyl-diphosphooligosaccharide--protein glycosyltransferase subunit 2, found in Canis lupus familiaris (Dog).